The following is a 355-amino-acid chain: Blue-sensitive opsin (355 aa).

Topologically, residues 1–36 (MNGTEGINFYVPLSNKTGLVRSPFEYPQYYLAEPWK) are extracellular. N-linked (GlcNAc...) asparagine glycans are attached at residues Asn2 and Asn15. A helical transmembrane segment spans residues 37–61 (YKVVCCYIFFLIFTGLPINILTLLV). Over 62–73 (TFKHKKLRQPLN) the chain is Cytoplasmic. The chain crosses the membrane as a helical span at residues 74-98 (YILVNLAVADLFMACFGFTVTFYTA). Residues 99 to 113 (WNGYFIFGPIGCAIE) are Extracellular-facing. Cys110 and Cys187 form a disulfide bridge. A helical membrane pass occupies residues 114-133 (GFFATLGGQVALWSLVVLAI). Residues 134–152 (ERYIVVCKPMGNFRFSATH) are Cytoplasmic-facing. The chain crosses the membrane as a helical span at residues 153-176 (ALMGISFTWFMSFSCAAPPLLGWS). The Extracellular segment spans residues 177 to 202 (RYIPEGMQCSCGPDYYTLNPDYHNES). N-linked (GlcNAc...) asparagine glycosylation is present at Asn200. The helical transmembrane segment at 203–230 (YVLYMFGVHFVIPVVVIFFSYGRLICKV) threads the bilayer. Residues 231-252 (REAAAQQQESASTQKAEREVTR) are Cytoplasmic-facing. A helical membrane pass occupies residues 253–276 (MVILMVLGFLLAWTPYAMVAFWIF). Over 277–284 (TNKGVDFS) the chain is Extracellular. A helical membrane pass occupies residues 285-309 (ATLMSVPAFFSKSSSLYNPIIYVLM). N6-(retinylidene)lysine is present on Lys296. Topologically, residues 310-355 (NKQFRNCMITTICCGKNPFGDEDVSSSVSQSKTEVSSVSSSQVSPA) are cytoplasmic. Residues Cys322 and Cys323 are each lipidated (S-palmitoyl cysteine). The interval 332–355 (DVSSSVSQSKTEVSSVSSSQVSPA) is disordered. Positions 334 to 355 (SSSVSQSKTEVSSVSSSQVSPA) are enriched in low complexity.

It belongs to the G-protein coupled receptor 1 family. Opsin subfamily. Phosphorylated on some or all of the serine and threonine residues present in the C-terminal region.

It localises to the membrane. In terms of biological role, visual pigments are the light-absorbing molecules that mediate vision. They consist of an apoprotein, opsin, covalently linked to cis-retinal. This opsin uses a vitamin A2 chromophore. The chain is Blue-sensitive opsin from Anolis carolinensis (Green anole).